We begin with the raw amino-acid sequence, 561 residues long: Transmembrane protein 209 (561 aa).

Ser11 carries the post-translational modification Phosphoserine. Residues 28–48 (VVLAWGLLNVSMAGMIYTEMT) form a helical membrane-spanning segment. Residue Asn57 is glycosylated (N-linked (GlcNAc...) asparagine). The helical transmembrane segment at 60–80 (YWPLWYIELALASLFSLNALF) threads the bilayer. Ser98 is modified (phosphoserine). Disordered stretches follow at residues 120 to 156 (LAATQISPSPPSPSIQGQSVLSYSPSRSPSTSPKFAT) and 200 to 232 (SSPYPTTVGPVESSGLRARYRSPPTVYNSPTDK). Residues 138–152 (SVLSYSPSRSPSTSP) show a composition bias toward low complexity. Phosphoserine is present on residues Ser201 and Ser248. A disordered region spans residues 250 to 270 (EEKQHRVKLGSPDSTSPSTSP). Low complexity predominate over residues 260-270 (SPDSTSPSTSP). Asn274 is a glycosylation site (N-linked (GlcNAc...) asparagine). Residue Ser278 is modified to Phosphoserine.

Interacts with NUP205.

The protein localises to the membrane. It localises to the nucleus envelope. It is found in the golgi apparatus. The protein resides in the cytoplasm. In terms of biological role, nuclear envelope protein which in association with NUP205, may be involved in nuclear transport of various nuclear proteins in addition to MYC. This Mus musculus (Mouse) protein is Transmembrane protein 209 (Tmem209).